A 102-amino-acid chain; its full sequence is Small ribosomal subunit protein uS10 (102 aa).

This sequence belongs to the universal ribosomal protein uS10 family. As to quaternary structure, part of the 30S ribosomal subunit.

In terms of biological role, involved in the binding of tRNA to the ribosomes. The protein is Small ribosomal subunit protein uS10 of Methanothermobacter thermautotrophicus (strain ATCC 29096 / DSM 1053 / JCM 10044 / NBRC 100330 / Delta H) (Methanobacterium thermoautotrophicum).